The following is a 92-amino-acid chain: Bombyxin A-3 (92 aa).

Residues 1-19 form the signal peptide; it reads MKILLAIALMLSTVMWVST. Gln20 carries the post-translational modification Pyrrolidone carboxylic acid. 3 cysteine pairs are disulfide-bonded: Cys29/Cys79, Cys41/Cys92, and Cys78/Cys83. Residues 50 to 70 constitute a propeptide, c peptide like; the sequence is SDAQYVSYGSAWLMPYSEGRG.

It belongs to the insulin family. In terms of assembly, heterodimer of a B chain and an A chain linked by two disulfide bonds.

It localises to the secreted. Brain peptide responsible for activation of prothoracic glands to produce ecdysone in insects. In Bombyx mori (Silk moth), this protein is Bombyxin A-3 (BBXA3).